A 663-amino-acid chain; its full sequence is MSDRSSLFDVRSSTSVTLDQVVRRDTVEIPDEAALAMPVQPLSFWQGGARRATALTQDMNLRRWMLGLMTIAMGVAGWKASFDTIALGGVTRLEAVVLTLLAPLFLALSLWFCTALIGFVVLMGRPKDPLGIDSEAPMPKLHTRTAILMPVYNEDAAAVFARLRAMDASIAETGSARNFDIFVISDTRDAQVALAEQACFARFRREANCNVYYRIRKENTGRKAGNVADWVSRWGSAYEHMLVLDADSLMTGEAMVRLADAMERHPGAGLIQTMPMIINGQTIFARTLQFATRLYGRVAWTGLAWWSGSESSFWGHNAIVRTRAFAETCGLPHLPGPKPFGGEVMSHDALESALLRRGGWSVHLAPYLDGSYEESPSNLLDFATRDRRWCRGNIQHVPLIALPGLHWMSRMHLVIGVLSYALSPLWFFCLSAGLISRALMPELKKAAFTMADLKAAAHALIDWSEIQATAWAMIITFVLLFGPKILGAILVLARKGEVKGFGGKRRMAAGLGVEMLLSALVAPMLMFTQTRAIVEILAGKVGGWAAQRRDADKVDFKEAWAAMGWISLSGLILAASFWFTPDLLTATAPILAGLVLAVPLTMLGAHKVAGLKLKANGLFMTPEERRPPAIVRAAVGAACEPPIRWFARNGRPIGPTTKIRDAA.

The next 6 membrane-spanning stretches (helical) occupy residues 64-86 (WMLGLMTIAMGVAGWKASFDTIA), 101-123 (LAPLFLALSLWFCTALIGFVVLM), 413-435 (LVIGVLSYALSPLWFFCLSAGLI), 470-492 (AWAMIITFVLLFGPKILGAILVL), 558-580 (EAWAAMGWISLSGLILAASFWFT), and 584-606 (LTATAPILAGLVLAVPLTMLGAH).

Belongs to the glycosyltransferase 2 family. OpgH subfamily.

The protein localises to the cell inner membrane. It functions in the pathway glycan metabolism; osmoregulated periplasmic glucan (OPG) biosynthesis. Functionally, involved in the biosynthesis of osmoregulated periplasmic glucans (OPGs). In Caulobacter vibrioides (strain ATCC 19089 / CIP 103742 / CB 15) (Caulobacter crescentus), this protein is Glucans biosynthesis glucosyltransferase H.